A 347-amino-acid polypeptide reads, in one-letter code: GMP reductase (347 aa).

108-131 (DDFTKTRQILAMSTALRFICVDVA) is an NADP(+) binding site. K(+) contacts are provided by glycine 181 and glycine 183. Catalysis depends on cysteine 186, which acts as the Thioimidate intermediate. Residue 216 to 239 (IVGDGGCTCPGDVAKAFGGGADFV) coordinates NADP(+).

This sequence belongs to the IMPDH/GMPR family. GuaC type 1 subfamily. Homotetramer.

The catalysed reaction is IMP + NH4(+) + NADP(+) = GMP + NADPH + 2 H(+). Functionally, catalyzes the irreversible NADPH-dependent deamination of GMP to IMP. It functions in the conversion of nucleobase, nucleoside and nucleotide derivatives of G to A nucleotides, and in maintaining the intracellular balance of A and G nucleotides. The chain is GMP reductase from Aeromonas salmonicida (strain A449).